The chain runs to 488 residues: BTB/POZ domain-containing protein 1 (488 aa).

Positions 1–19 are enriched in low complexity; it reads MASLGSAAAGEPATGAEAE. Residues 1 to 42 are disordered; that stretch reads MASLGSAAAGEPATGAEAEPGPPAPPPPPPPPPAPSPSALGP. Residues 20–36 are compositionally biased toward pro residues; the sequence is PGPPAPPPPPPPPPAPS. The BTB domain maps to 75–151; that stretch reads SDVRFVLGKG…LYSDEVQIGP (77 aa). Omega-N-methylarginine is present on R85. One can recognise a BACK domain in the interval 190 to 290; that stretch reads LTQARLFDEP…IRFPLMTIEE (101 aa).

As to quaternary structure, interacts (via C-terminus) with TOP1. Interacts with TRIM5 isoform Delta. Interacts with CUL3. In terms of tissue distribution, strongly expressed in heart and skeletal muscle. Weakly expressed in myoblast C2C12 cells, but strongly up-regulated upon their differentiation into myotubes.

Its subcellular location is the cytoplasm. The protein operates within protein modification; protein ubiquitination. Its function is as follows. Probable substrate-specific adapter of an E3 ubiquitin-protein ligase complex which mediates the ubiquitination and subsequent proteasomal degradation of target proteins. Seems to regulate expression levels and/or subnuclear distribution of TOP1, via an unknown mechanism. May play a role in mesenchymal differentiation where it promotes myogenic differentiation and suppresses adipogenesis. The sequence is that of BTB/POZ domain-containing protein 1 (Btbd1) from Mus musculus (Mouse).